Reading from the N-terminus, the 193-residue chain is Holliday junction branch migration complex subunit RuvA (193 aa).

The interval 1-64 (MIGRIAGTLL…EDAHLLYGFL (64 aa)) is domain I. The domain II stretch occupies residues 65-139 (TPPERSTFRE…GKLGADLGPL (75 aa)). Positions 139–143 (LAGAA) are flexible linker. A domain III region spans residues 144 to 193 (SPSDHATDILNALVALGYSEKEALAAIKNVPAGTGVSEGIKLSLKALSKA).

It belongs to the RuvA family. In terms of assembly, homotetramer. Forms an RuvA(8)-RuvB(12)-Holliday junction (HJ) complex. HJ DNA is sandwiched between 2 RuvA tetramers; dsDNA enters through RuvA and exits via RuvB. An RuvB hexamer assembles on each DNA strand where it exits the tetramer. Each RuvB hexamer is contacted by two RuvA subunits (via domain III) on 2 adjacent RuvB subunits; this complex drives branch migration. In the full resolvosome a probable DNA-RuvA(4)-RuvB(12)-RuvC(2) complex forms which resolves the HJ.

It localises to the cytoplasm. The RuvA-RuvB-RuvC complex processes Holliday junction (HJ) DNA during genetic recombination and DNA repair, while the RuvA-RuvB complex plays an important role in the rescue of blocked DNA replication forks via replication fork reversal (RFR). RuvA specifically binds to HJ cruciform DNA, conferring on it an open structure. The RuvB hexamer acts as an ATP-dependent pump, pulling dsDNA into and through the RuvAB complex. HJ branch migration allows RuvC to scan DNA until it finds its consensus sequence, where it cleaves and resolves the cruciform DNA. This chain is Holliday junction branch migration complex subunit RuvA, found in Burkholderia mallei (strain NCTC 10229).